A 549-amino-acid chain; its full sequence is MKRVLTALAAALPFAAHAADAISGAVERQPTNWQAIIMFLIFVVFTLGITYWASKRVRSRSDYYTAGGNITGFQNGLAIAGDYMSAASFLGISALVFTSGYDGLIYSLGFLVGWPIILFLIAERLRNLGRYTFADVASYRLKQGPIRILSACGSLVVVALYLIAQMVGAGKLIELLFGLNYHIAVVLVGVLMMMYVLFGGMLATTWVQIIKAVLLLFGASFMAFMVMKHVGFSFNNLFTEAMAVHPKGTAIMSPGGLVQDPISALSLGLGLMFGTAGLPHILMRFFTVSDAREARKSVFYATGFMGYFYILTFIIGFGAIMLVGANPAYKDAAGALIGGNNMAAVHLANAVGGNLFLGFISAVAFATILAVVAGLTLAGASAVSHDLYANVFRKGATEREELKVSKITVLVLGVIAIILGILFENQNIAFMVGLAFAIAASCNFPIILLSMYWSKLTTRGAMLGGWLGLLTAVVLMILGPTIWVQILGHEKAIFPYEYPALFSISVAFLGIWFFSATDNSAEGNREREQFRAQFIRSQTGFGVQQGRAH.

Helical transmembrane passes span 33–53, 77–97, 103–123, 148–168, 183–203, 206–226, 262–282, 303–323, 355–375, 404–424, 428–448, 464–484, and 493–513; these read WQAI…TYWA, LAIA…ALVF, GLIY…LIAE, ILSA…QMVG, IAVV…GMLA, WVQI…AFMV, ISAL…PHIL, GFMG…IMLV, LFLG…VAGL, VSKI…ILFE, IAFM…PIIL, GGWL…TIWV, and IFPY…GIWF.

It belongs to the sodium:solute symporter (SSF) (TC 2.A.21) family.

The protein localises to the cell inner membrane. Transports acetate. The sequence is that of Cation/acetate symporter ActP from Salmonella newport (strain SL254).